Reading from the N-terminus, the 251-residue chain is uncharacterized protein (251 aa).

The 116-residue stretch at 3 to 118 (KVIICDDERI…QLEHILDILV (116 aa)) folds into the Response regulatory domain. At aspartate 55 the chain carries 4-aspartylphosphate. Residues 152–249 (NQILSQIKQH…HMSPSDYNKQ (98 aa)) enclose the HTH araC/xylS-type domain. 2 consecutive DNA-binding regions (H-T-H motif) follow at residues 169 to 190 (LDLI…KEHV) and 216 to 239 (HYEI…KKYL).

In terms of processing, phosphorylated by SERP2405.

Its subcellular location is the cytoplasm. Probable member of the two-component regulatory system SERP2405/SERP2406. This is an uncharacterized protein from Staphylococcus epidermidis (strain ATCC 35984 / DSM 28319 / BCRC 17069 / CCUG 31568 / BM 3577 / RP62A).